Consider the following 675-residue polypeptide: Regulator of G-protein signaling 9 (675 aa).

Residues 30-105 form the DEP domain; the sequence is PETGVRMHNQ…PDSSLYRFQT (76 aa). A G protein gamma domain is found at 222-283; the sequence is VRKEIMYYQQ…DTQFWDLNAK (62 aa). An RGS domain is found at 299 to 414; sequence NFSELIRDPK…LKSPIYKEML (116 aa). Disordered regions lie at residues 524-571 and 637-662; these read RVAL…PPKA and DSGTCLMDSDDPRAGESGDQTTEKEV. Over residues 542–551 the composition is skewed to polar residues; sequence SGANSGPSVT. 2 stretches are compositionally biased toward basic and acidic residues: residues 552–562 and 646–662; these read ENREPSADHSR and DDPRAGESGDQTTEKEV.

In terms of assembly, heterodimer with GNB5. Interacts with RGS7BP, leading to regulate the subcellular location of the heterodimer formed with GNB5. Component of the RGS9-1-Gbeta5 complex composed of RGS9 (RGS9-1), Gbeta5 (GNB5) and RGS9BP. Interacts with PDE6G and GNAT1. Retinal isoform 1 is light-dependent phosphorylated at 'Ser-475'. Phosphorylation is decreased by light exposition. Interaction with RGS9BP is decreased when isoform 1 is phosphorylated at 'Ser-475'. In terms of tissue distribution, isoform 1 is expressed in photoreceptor outer segments. Isoform 2 is expressed in brain striatum.

It is found in the membrane. Its function is as follows. Inhibits signal transduction by increasing the GTPase activity of G protein alpha subunits thereby driving them into their inactive GDP-bound form. Binds to GNAT1. Involved in phototransduction; key element in the recovery phase of visual transduction. The chain is Regulator of G-protein signaling 9 (Rgs9) from Mus musculus (Mouse).